Consider the following 340-residue polypeptide: Mitochondrial amidoxime-reducing component 1 (340 aa).

Glycine 2 carries N-myristoyl glycine lipidation. Residues 2–24 (GAGSWALTLFGFSAFRVPGQPRS) lie on the Mitochondrial matrix side of the membrane. Residues 25 to 44 (TWLGVAALGLAAVALGTVAW) traverse the membrane as a helical; Signal-anchor for type II membrane protein segment. Over 45-340 (RRARPRRRRR…VGDPVYLLGQ (296 aa)) the chain is Cytoplasmic. Residues lysine 70, serine 71, and arginine 95 each coordinate Mo-molybdopterin. Positions 96–186 (FWLVINEEGN…KMQSCRLVHF (91 aa)) are MOSC N-terminal region. One can recognise an MOSC domain in the interval 191-338 (RPRSSRQMKA…IRVGDPVYLL (148 aa)). 7 residues coordinate Mo-molybdopterin: serine 214, arginine 241, asparagine 243, threonine 274, arginine 275, cysteine 276, and tyrosine 320.

As to quaternary structure, component of a complex composed of cytochrome b5, NADH-cytochrome b5 reductase and MTARC1. It depends on Mo-molybdopterin as a cofactor.

Its subcellular location is the mitochondrion outer membrane. The protein resides in the membrane. The catalysed reaction is N(omega)-hydroxy-L-arginine + 2 Fe(II)-[cytochrome b5] + 2 H(+) = L-arginine + 2 Fe(III)-[cytochrome b5] + H2O. Catalyzes the reduction of N-oxygenated molecules, acting as a counterpart of cytochrome P450 and flavin-containing monooxygenases in metabolic cycles. As a component of prodrug-converting system, reduces a multitude of N-hydroxylated prodrugs particularly amidoximes, leading to increased drug bioavailability. May be involved in mitochondrial N(omega)-hydroxy-L-arginine (NOHA) reduction, regulating endogenous nitric oxide levels and biosynthesis. Postulated to cleave the N-OH bond of N-hydroxylated substrates in concert with electron transfer from NADH to cytochrome b5 reductase then to cytochrome b5, the ultimate electron donor that primes the active site for substrate reduction. The protein is Mitochondrial amidoxime-reducing component 1 (Mtarc1) of Mus musculus (Mouse).